A 259-amino-acid polypeptide reads, in one-letter code: Phosphate import ATP-binding protein PstB 1 (259 aa).

The ABC transporter domain occupies 13–254 (IQVRGLEFFY…PSKTQTEDYI (242 aa)). Residue 45 to 52 (GPSGCGKS) participates in ATP binding.

It belongs to the ABC transporter superfamily. Phosphate importer (TC 3.A.1.7) family. As to quaternary structure, the complex is composed of two ATP-binding proteins (PstB), two transmembrane proteins (PstC and PstA) and a solute-binding protein (PstS).

It is found in the cell inner membrane. It catalyses the reaction phosphate(out) + ATP + H2O = ADP + 2 phosphate(in) + H(+). Part of the ABC transporter complex PstSACB involved in phosphate import. Responsible for energy coupling to the transport system. This chain is Phosphate import ATP-binding protein PstB 1, found in Pseudomonas syringae pv. tomato (strain ATCC BAA-871 / DC3000).